The primary structure comprises 559 residues: Protein pp71 (559 aa).

At cysteine 218 the chain carries S-nitrosocysteine; by host. Residue threonine 223 is modified to Phosphothreonine. 2 disordered regions span residues 404 to 440 (EFLP…TPLS) and 530 to 559 (SSTL…RPRI). A compositionally biased stretch (acidic residues) spans 415–430 (TEEEEEEEEEDDEDDL). Low complexity-rich tracts occupy residues 431-440 (SSTPTPTPLS) and 543-559 (PIST…RPRI).

This sequence belongs to the herpesviridae pp71 family. As to quaternary structure, interacts with the host protein DAXX; this interaction takes place at ND10 and induces the reversal of DAXX-mediated repression of viral transcription. Interacts with UL35. Interacts with host TMEM173/STING1; this interaction inhibits the cGAS/STING pathway. Interacts with host RB1; this interaction mediates RB1 proteasomal degradation. Post-translationally, S-nitrosylation limits ability to undermine the cGAS/STING antiviral pathway.

Its subcellular location is the virion tegument. It localises to the host nucleus. The protein localises to the host endoplasmic reticulum. In terms of biological role, stimulates viral immediate-early (IE) transcription. Plays a role in the inhibition of the host innate repsonse by targeting STING1 and thus the cGAS-STING pathway. Also counteracts host DAXX-mediated repression of viral transcription. Displaces a DAXX-binding protein, ATRX, from nuclear domain 10 sites (ND10) shortly after infection. Increases the basal level of SUMOylated DAXX in infected cells. Stimulates quiescent cells to re-enter the cell cycle, proceed through G1 and enter the S phase. Interacts with hypophosphorylated forms of RB1 and induces their degradation by the proteasome without involving ubiquitin conjugation. The sequence is that of Protein pp71 (UL82) from Human cytomegalovirus (strain AD169) (HHV-5).